The primary structure comprises 153 residues: Aminoglycoside N(6')-acetyltransferase type 1 (153 aa).

The N-acetyltransferase domain maps to 6–153 (PTIRQATPAD…YFRMPLEPSA (148 aa)). Substrate contacts are provided by W27, Y70, E83, D119, and E140.

As to quaternary structure, homodimer.

The catalysed reaction is kanamycin B + acetyl-CoA = N(6')-acetylkanamycin B + CoA + H(+). Functionally, catalyzes the transfer of an acetyl group from acetyl-CoA to the 6'-amino group of aminoglycoside molecules conferring resistance to antibiotics containing the purpurosamine ring including amikacin, gentamicin, kanamycin B, tobramycin, netilmicin, and isepamicin. The protein is Aminoglycoside N(6')-acetyltransferase type 1 of Stenotrophomonas maltophilia (Pseudomonas maltophilia).